Consider the following 439-residue polypeptide: Xylose isomerase (439 aa).

Residues H101 and D104 contribute to the active site. Mg(2+) is bound by residues E232, E268, H271, D296, D307, D309, and D339.

This sequence belongs to the xylose isomerase family. Homotetramer. Mg(2+) serves as cofactor.

It localises to the cytoplasm. The catalysed reaction is alpha-D-xylose = alpha-D-xylulofuranose. The sequence is that of Xylose isomerase (xylA) from Lactococcus lactis subsp. lactis (strain IL1403) (Streptococcus lactis).